A 210-amino-acid polypeptide reads, in one-letter code: MTSNLKRNFEYLVQYIQPHLRPKSSHSISLGYLSKEKISQEEMQIIRATQKLARTKYMTLYCIPRAWLIPFHEFLNNRSYRFPKLDYSQTPIRLAIRSGKKSVHKSAVVRHHNTTRIRETFIDIIKALYVNEKHHYLPKQAIDVVIDSYNGGCVNLPPETLFYDMQRLWLTAMNTYENQKPPNLKLLLHDHGTVVSLGSDNVPLYRKLDS.

Its subcellular location is the mitochondrion. This is an uncharacterized protein from Schizosaccharomyces pombe (strain 972 / ATCC 24843) (Fission yeast).